A 63-amino-acid chain; its full sequence is Cytochrome c oxidase subunit 7C, mitochondrial (63 aa).

A mitochondrion-targeting transit peptide spans 1-16; sequence MLGHSIRRFTTSVVRR. At 17 to 33 the chain is on the mitochondrial matrix side; it reads SHYEEGPGKNLPFSVEN. The residue at position 25 (Lys25) is an N6-acetyllysine; alternate. Position 25 is an N6-succinyllysine; alternate (Lys25). A helical membrane pass occupies residues 34–60; sequence KWTLLVKMCLFFGSAFSVPFLIVRHQL. The Mitochondrial intermembrane segment spans residues 61–63; that stretch reads LKQ.

The protein belongs to the cytochrome c oxidase VIIc family. Component of the cytochrome c oxidase (complex IV, CIV), a multisubunit enzyme composed of 14 subunits. The complex is composed of a catalytic core of 3 subunits MT-CO1, MT-CO2 and MT-CO3, encoded in the mitochondrial DNA, and 11 supernumerary subunits COX4I, COX5A, COX5B, COX6A, COX6B, COX6C, COX7A, COX7B, COX7C, COX8 and NDUFA4, which are encoded in the nuclear genome. The complex exists as a monomer or a dimer and forms supercomplexes (SCs) in the inner mitochondrial membrane with NADH-ubiquinone oxidoreductase (complex I, CI) and ubiquinol-cytochrome c oxidoreductase (cytochrome b-c1 complex, complex III, CIII), resulting in different assemblies (supercomplex SCI(1)III(2)IV(1) and megacomplex MCI(2)III(2)IV(2)). Interacts with RAB5IF.

It is found in the mitochondrion inner membrane. It functions in the pathway energy metabolism; oxidative phosphorylation. In terms of biological role, component of the cytochrome c oxidase, the last enzyme in the mitochondrial electron transport chain which drives oxidative phosphorylation. The respiratory chain contains 3 multisubunit complexes succinate dehydrogenase (complex II, CII), ubiquinol-cytochrome c oxidoreductase (cytochrome b-c1 complex, complex III, CIII) and cytochrome c oxidase (complex IV, CIV), that cooperate to transfer electrons derived from NADH and succinate to molecular oxygen, creating an electrochemical gradient over the inner membrane that drives transmembrane transport and the ATP synthase. Cytochrome c oxidase is the component of the respiratory chain that catalyzes the reduction of oxygen to water. Electrons originating from reduced cytochrome c in the intermembrane space (IMS) are transferred via the dinuclear copper A center (CU(A)) of subunit 2 and heme A of subunit 1 to the active site in subunit 1, a binuclear center (BNC) formed by heme A3 and copper B (CU(B)). The BNC reduces molecular oxygen to 2 water molecules using 4 electrons from cytochrome c in the IMS and 4 protons from the mitochondrial matrix. The polypeptide is Cytochrome c oxidase subunit 7C, mitochondrial (COX7C) (Macaca fascicularis (Crab-eating macaque)).